We begin with the raw amino-acid sequence, 523 residues long: MVPPRRHRGAGRPGVLSSSPPFRLRSAKFSGIALEDLRRALKTRLQMVCVFIMNRMNSQNSGFTQRRRMALGIVILLLVDVIWVASSELTSYVFTQYNKPFFSTFAKTSMFVLYLLGFIIWKPWRQQCTRGLRGKHAAFFADAEGYFAACATDTTMNSSLSEPLYVPVKFHDLPSEKPESTNIDTEKTPKKSRVRFSNIMEIRQLPSNHALESKLSRMSYPVKEQESILKTVGKLTATQVAKISFFFCFVWFLANLSYQEALSDTQVAIVNILSSTSGLFTLILAAVFPSNSGDRFTLSKLLAVILSIGGVVLVNLSGSEKSAGRDTIGSIWSLAGAMLYAVYIVMIKRKVDREDKLDIPMFFGFVGLFNLLLLWPGFFLLHYTGFEDFEFPNKVVLMCIIINGLIGTVLSEFLWLWGCFLTSSLIGTLALSLTIPLSIIADMCMQKVQFSWLFFAGAIPVFFSFFIVTLLCHYNNWDPVMVGIRRIFAFICRKHRIQRVPEDSEQCESLISMHSVSQEDGDS.

The next 2 membrane-spanning stretches (helical) occupy residues 69–89 (MALGIVILLLVDVIWVASSEL) and 101–121 (FFSTFAKTSMFVLYLLGFIIW). Serine 207 is modified (phosphoserine). Helical transmembrane passes span 243–263 (ISFFFCFVWFLANLSYQEALS), 268–288 (AIVNILSSTSGLFTLILAAVF), 296–316 (FTLSKLLAVILSIGGVVLVNL), 327–347 (TIGSIWSLAGAMLYAVYIVMI), 361–381 (MFFGFVGLFNLLLLWPGFFLL), 395–415 (VVLMCIIINGLIGTVLSEFLW), 420–440 (FLTSSLIGTLALSLTIPLSII), and 452–472 (WLFFAGAIPVFFSFFIVTLLC). The region spanning 252–316 (FLANLSYQEA…SIGGVVLVNL (65 aa)) is the EamA domain.

It belongs to the SLC35F solute transporter family.

It localises to the membrane. Functionally, putative solute transporter. The chain is Solute carrier family 35 member F5 (SLC35F5) from Pongo abelii (Sumatran orangutan).